The chain runs to 167 residues: Insertion element IS1 4 protein InsB (167 aa).

The protein belongs to the transposase 27 family.

In terms of biological role, absolutely required for transposition of IS1. The protein is Insertion element IS1 4 protein InsB (insB4) of Escherichia coli (strain K12).